Here is a 181-residue protein sequence, read N- to C-terminus: Putative adenylate kinase (181 aa).

ATP-binding residues include Gly-10, Gly-12, Lys-13, Ser-14, and Thr-15. The tract at residues 35–58 is NMP; it reads NITEVVSKNGLYLEKDIEMDSYVV. Residues 106-116 form an LID region; that stretch reads SRNYSSEKVKE. Positions 107 and 147 each coordinate ATP.

This sequence belongs to the adenylate kinase family. AK6 subfamily. In terms of assembly, interacts with uS11. Not a structural component of 40S pre-ribosomes, but transiently interacts with them by binding to uS11.

The catalysed reaction is AMP + ATP = 2 ADP. The enzyme catalyses ATP + H2O = ADP + phosphate + H(+). Functionally, broad-specificity nucleoside monophosphate (NMP) kinase that catalyzes the reversible transfer of the terminal phosphate group between nucleoside triphosphates and monophosphates. Also has ATPase activity. Involved in the late maturation steps of the 30S ribosomal particles, specifically 16S rRNA maturation. While NMP activity is not required for ribosome maturation, ATPase activity is. Associates transiently with small ribosomal subunit protein uS11. ATP hydrolysis breaks the interaction with uS11. May temporarily remove uS11 from the ribosome to enable a conformational change of the ribosomal RNA that is needed for the final maturation step of the small ribosomal subunit. This Methanococcus maripaludis (strain C7 / ATCC BAA-1331) protein is Putative adenylate kinase.